The following is a 224-amino-acid chain: Non-structural protein V (224 aa).

Positions 55–65 (KNIQYPTTSHQ) are enriched in polar residues. Disordered stretches follow at residues 55–90 (KNIQ…GTGG) and 145–172 (TSTP…GHRR). Zn(2+) contacts are provided by histidine 170, cysteine 189, cysteine 193, cysteine 205, cysteine 207, cysteine 210, cysteine 214, and cysteine 217.

It belongs to the paramyxoviruses V protein family. In terms of assembly, interacts with host IFIH1/MDA5 and DHX58/LGP2. Forms with host DDB1, CUL4A, STAT1, STAT2 and STAT3 the mumps virus V-dependent complex (VDC).

Its subcellular location is the virion. The protein localises to the host cytoplasm. Plays an essential role in the inhibition of host immune response. Prevents the establishment of cellular antiviral state by blocking interferon-alpha/beta (IFN-alpha/beta) production and signaling pathway. Interacts with host IFIH1/MDA5 and DHX58/LGP2 to inhibit the transduction pathway involved in the activation of IFN-beta promoter, thus protecting the virus against cell antiviral state. Blocks the type I and II interferon signaling pathways by interacting with host STAT1, STAT2 and STAT3, and mediating their ubiquitination and subsequent proteasomal degradation. In Mumps virus genotype B (strain Miyahara vaccine) (MuV), this protein is Non-structural protein V.